The primary structure comprises 515 residues: Hyccin (515 aa).

A compositionally biased stretch (low complexity) spans 358-378 (STSQSALSNSSNTSSKNLLGK). Disordered stretches follow at residues 358 to 410 (STSQ…TQRA) and 491 to 515 (TDLPVLSKQPNQQRPPSISITLSTD). Over residues 389–403 (AGREKEGETCREHLS) the composition is skewed to basic and acidic residues. Positions 498 to 515 (KQPNQQRPPSISITLSTD) are enriched in polar residues.

The protein belongs to the Hyccin family. In terms of assembly, component of a phosphatidylinositol 4-kinase (PI4K) complex.

The protein resides in the cytoplasm. It is found in the cytosol. It localises to the cell membrane. Functionally, component of a complex required to localize phosphatidylinositol 4-kinase (PI4K) to the plasma membrane. The complex acts as a regulator of phosphatidylinositol 4-phosphate (PtdIns(4)P) synthesis. This Gallus gallus (Chicken) protein is Hyccin (HYCC1).